We begin with the raw amino-acid sequence, 41 residues long: Large ribosomal subunit protein bL36 (41 aa).

It belongs to the bacterial ribosomal protein bL36 family.

The protein is Large ribosomal subunit protein bL36 of Xylella fastidiosa (strain 9a5c).